Reading from the N-terminus, the 324-residue chain is Non-homologous end joining protein Ku 1 (324 aa).

The Ku domain occupies 10-193 (INFGLVTIPV…AKPSDKEIQM (184 aa)). A disordered region spans residues 256–324 (QARRGRGGQV…SGGRRRRRAS (69 aa)). Over residues 281–292 (AELDKKAKELGI) the composition is skewed to basic and acidic residues.

It belongs to the prokaryotic Ku family. Homodimer. Interacts with LigD.

Its function is as follows. With LigD forms a non-homologous end joining (NHEJ) DNA repair enzyme, which repairs dsDNA breaks with reduced fidelity. Binds linear dsDNA with 5'- and 3'- overhangs but not closed circular dsDNA nor ssDNA. Recruits and stimulates the ligase activity of LigD. This is Non-homologous end joining protein Ku 1 from Saccharopolyspora erythraea (strain ATCC 11635 / DSM 40517 / JCM 4748 / NBRC 13426 / NCIMB 8594 / NRRL 2338).